We begin with the raw amino-acid sequence, 284 residues long: Diaminopimelate epimerase (284 aa).

Substrate-binding residues include asparagine 13 and asparagine 66. Residue cysteine 75 is the Proton donor of the active site. Substrate contacts are provided by residues 76–77, asparagine 166, asparagine 199, and 217–218; these read GN and ER. Catalysis depends on cysteine 226, which acts as the Proton acceptor. 227–228 provides a ligand contact to substrate; that stretch reads GT.

This sequence belongs to the diaminopimelate epimerase family. In terms of assembly, homodimer.

The protein localises to the cytoplasm. It catalyses the reaction (2S,6S)-2,6-diaminopimelate = meso-2,6-diaminopimelate. The protein operates within amino-acid biosynthesis; L-lysine biosynthesis via DAP pathway; DL-2,6-diaminopimelate from LL-2,6-diaminopimelate: step 1/1. Its function is as follows. Catalyzes the stereoinversion of LL-2,6-diaminopimelate (L,L-DAP) to meso-diaminopimelate (meso-DAP), a precursor of L-lysine and an essential component of the bacterial peptidoglycan. The polypeptide is Diaminopimelate epimerase (Halothermothrix orenii (strain H 168 / OCM 544 / DSM 9562)).